The following is a 183-amino-acid chain: Translation initiation factor IF-3 (183 aa).

Belongs to the IF-3 family. As to quaternary structure, monomer.

It is found in the cytoplasm. IF-3 binds to the 30S ribosomal subunit and shifts the equilibrium between 70S ribosomes and their 50S and 30S subunits in favor of the free subunits, thus enhancing the availability of 30S subunits on which protein synthesis initiation begins. In Pseudomonas putida (strain ATCC 700007 / DSM 6899 / JCM 31910 / BCRC 17059 / LMG 24140 / F1), this protein is Translation initiation factor IF-3.